The chain runs to 369 residues: uncharacterized protein (369 aa).

K184 carries the post-translational modification N6-(pyridoxal phosphate)lysine.

The protein belongs to the class-V pyridoxal-phosphate-dependent aminotransferase family. It depends on pyridoxal 5'-phosphate as a cofactor.

This is an uncharacterized protein from Helicobacter pylori (strain ATCC 700392 / 26695) (Campylobacter pylori).